A 94-amino-acid chain; its full sequence is MTINYQFGDVDAHGAMIRALAGSLEAEHQAIISDVLTASDFWGGAGSAACQGFITQLGRNFQVIYEQANAHGQKVQAAGNNMAQTDSAVGSSWA.

This sequence belongs to the WXG100 family. ESAT-6 subfamily.

Its subcellular location is the secreted. This chain is ESAT-6-like protein EsxI, found in Mycobacterium bovis (strain ATCC BAA-935 / AF2122/97).